Reading from the N-terminus, the 85-residue chain is N.vectensis toxin 1 4 (85 aa).

The N-terminal stretch at 1-20 is a signal peptide; that stretch reads MASFKIVIVCLALLVAVASA. A propeptide spanning residues 21–36 is cleaved from the precursor; sequence RRRDMMSDDELDYHYS. 3 cysteine pairs are disulfide-bonded: Cys42–Cys82, Cys44–Cys72, and Cys65–Cys83.

The protein belongs to the sea anemone sodium channel inhibitory toxin family. Type II subfamily. As to expression, expressed in ectodermal glands and in clumps outside of the extodermal layer. Is not expressed in nematocytes. In adult female tissues, shows similar expression levels in mesenteries (gametes-producing tissue), tentacles, pharynx and physa.

It is found in the secreted. In terms of biological role, binds to site 3 of voltage-gated sodium channels and inhibits the inactivation process. Is highly active on DmNav1/TipE (drosophila) and is only extremely weakly active on rat Nav1.4-beta-1/SCN4A-SCN1B, and on human Nav1.5-beta-1/SCN5A-beta-1. This reveals high specificity for arthropod over mammalian channels. In vivo, when released into the medium, this recombinant toxin induces impaired swimming, paralysis and death of the crustacean A.nauplii within several hours. Also causes paralysis of cherry shrimps immediately after injection at very low doses. Its effect on zebrafish (D.rerio) larvae is also rapid, since it induces tail twitching accompanied by impaired swimming after 20 minutes and complete paralysis within 45 minutes. It has also been observed to cause death of zebrafish larvae within 1 hour. The sequence is that of N.vectensis toxin 1 4 from Nematostella vectensis (Starlet sea anemone).